The chain runs to 422 residues: Tyrosine-protein kinase STYK1 (422 aa).

A helical membrane pass occupies residues 26–46; that stretch reads VIIVPTLLVTIFLILLGVILW. The 271-residue stretch at 114 to 384 folds into the Protein kinase domain; that stretch reads SEVLEQICSG…ELRLRLEAAI (271 aa). ATP contacts are provided by residues 120–128 and Lys147; that span reads ICSGSCGPI. The active-site Proton acceptor is the Asp251.

This sequence belongs to the protein kinase superfamily. Tyr protein kinase family. In terms of tissue distribution, widely expressed. Highly expressed in brain, placenta and prostate. Expressed in tumor cells such as hepatoma cells L-02, cervix carcinoma cells HeLa, ovary cancer cells Ho8910 and chronic myelogenous leukemia cells K-562, but not in other tumor cells such as epidermoid carcinoma (A-431). Undetectable in most normal lung tissues, widely expressed in lung cancers.

The protein resides in the membrane. It carries out the reaction L-tyrosyl-[protein] + ATP = O-phospho-L-tyrosyl-[protein] + ADP + H(+). In terms of biological role, probable tyrosine protein-kinase, which has strong transforming capabilities on a variety of cell lines. When overexpressed, it can also induce tumor cell invasion as well as metastasis in distant organs. May act by activating both MAP kinase and phosphatidylinositol 3'-kinases (PI3K) pathways. The polypeptide is Tyrosine-protein kinase STYK1 (STYK1) (Homo sapiens (Human)).